The primary structure comprises 162 residues: MAPIAVGDVLPDGKLAYFDEQDQLQEVSVHSLVAGKKVILFGVPGAFTPTCSLKHVPGFIEKAGELKSKGVTEILCISVNDPFVMKAWAKSYPENKHVKFLADGSATYTHALGLELNLQEKGLGTRSRRFALLVDDLKVKAANIEGGGEFTVSSADDILKDL.

Residues 4-162 (IAVGDVLPDG…SSADDILKDL (159 aa)) enclose the Thioredoxin domain. The Cysteine sulfenic acid (-SOH) intermediate role is filled by cysteine 51.

The protein belongs to the peroxiredoxin family. Prx5 subfamily. In terms of assembly, monomer. Homodimer. Glutathionylation of C(P) causes the dimer to dissociate. Subsequent reduction of the mixed disulfide bond leads again to dimerization.

The enzyme catalyses [glutaredoxin]-dithiol + a hydroperoxide = [glutaredoxin]-disulfide + an alcohol + H2O. Thiol-specific peroxidase that catalyzes the reduction of hydrogen peroxide and organic hydroperoxides to water and alcohols, respectively. Can reduce H(2)O(2) and short chain organic, fatty acid, and phospholipid hydroperoxides. Plays a role in cell protection against oxidative stress by detoxifying peroxides. This Populus trichocarpa (Western balsam poplar) protein is Peroxiredoxin-2.